The following is a 520-amino-acid chain: Probable cytosol aminopeptidase (520 aa).

Positions 232 and 237 each coordinate Mn(2+). Lys244 is an active-site residue. Residues Asp255, Asp314, and Glu316 each coordinate Mn(2+). Arg318 is a catalytic residue. Residues 488 to 520 (KAKKSTAKKATTKKTTTRKTASKTKSTKSKARK) form a disordered region.

The protein belongs to the peptidase M17 family. The cofactor is Mn(2+).

It is found in the cytoplasm. It catalyses the reaction Release of an N-terminal amino acid, Xaa-|-Yaa-, in which Xaa is preferably Leu, but may be other amino acids including Pro although not Arg or Lys, and Yaa may be Pro. Amino acid amides and methyl esters are also readily hydrolyzed, but rates on arylamides are exceedingly low.. The catalysed reaction is Release of an N-terminal amino acid, preferentially leucine, but not glutamic or aspartic acids.. In terms of biological role, presumably involved in the processing and regular turnover of intracellular proteins. Catalyzes the removal of unsubstituted N-terminal amino acids from various peptides. The sequence is that of Probable cytosol aminopeptidase (pepA) from Metamycoplasma salivarium (Mycoplasma salivarium).